A 147-amino-acid polypeptide reads, in one-letter code: D-aminoacyl-tRNA deacylase (147 aa).

The Gly-cisPro motif, important for rejection of L-amino acids signature appears at 137 to 138 (GP).

Belongs to the DTD family. In terms of assembly, homodimer.

It is found in the cytoplasm. It catalyses the reaction glycyl-tRNA(Ala) + H2O = tRNA(Ala) + glycine + H(+). The catalysed reaction is a D-aminoacyl-tRNA + H2O = a tRNA + a D-alpha-amino acid + H(+). Functionally, an aminoacyl-tRNA editing enzyme that deacylates mischarged D-aminoacyl-tRNAs. Also deacylates mischarged glycyl-tRNA(Ala), protecting cells against glycine mischarging by AlaRS. Acts via tRNA-based rather than protein-based catalysis; rejects L-amino acids rather than detecting D-amino acids in the active site. By recycling D-aminoacyl-tRNA to D-amino acids and free tRNA molecules, this enzyme counteracts the toxicity associated with the formation of D-aminoacyl-tRNA entities in vivo and helps enforce protein L-homochirality. This is D-aminoacyl-tRNA deacylase from Acinetobacter baumannii (strain AYE).